Consider the following 144-residue polypeptide: Large ribosomal subunit protein eL27 (144 aa).

The KOW domain occupies 6-43 (IKPGRLVILLNGKYAGRKAVVIKTFDDATASKSRPYGH).

It belongs to the eukaryotic ribosomal protein eL27 family.

In Dictyostelium discoideum (Social amoeba), this protein is Large ribosomal subunit protein eL27 (rpl27).